Reading from the N-terminus, the 233-residue chain is MHKVIRQMSQLRLQAPQGAALLRSADSSSISPAISPVSPPALQSKSLHTAASAGMLCAKWNKYNYGPRKWLEYNKTVHPPQETDEEPRNAYVCHMRSNIKYSPDKMWYIAAFVRGMSVDEALKQLNFVLKKGATDVKETILEAQQIAVERHNVEYKSNLWIAESFVGKGRVFKGVRRHARGRFGKVEYKHCHYFVRLEEGEPPQHYYQEPQTPEQQYESWMEQMRSRKIINSL.

The protein belongs to the universal ribosomal protein uL22 family. In terms of assembly, component of the mitochondrial ribosome large subunit (39S) which comprises a 16S rRNA and about 50 distinct proteins.

The protein localises to the mitochondrion. In Drosophila melanogaster (Fruit fly), this protein is Large ribosomal subunit protein uL22m (mRpL22).